The sequence spans 455 residues: Anaerobic glycerol-3-phosphate dehydrogenase subunit B (455 aa).

Belongs to the anaerobic G-3-P dehydrogenase subunit B family. In terms of assembly, composed of a catalytic GlpA/B dimer and of membrane bound GlpC. It depends on FMN as a cofactor.

The enzyme catalyses a quinone + sn-glycerol 3-phosphate = dihydroxyacetone phosphate + a quinol. It participates in polyol metabolism; glycerol degradation via glycerol kinase pathway; glycerone phosphate from sn-glycerol 3-phosphate (anaerobic route): step 1/1. Functionally, conversion of glycerol 3-phosphate to dihydroxyacetone. Uses fumarate or nitrate as electron acceptor. The sequence is that of Anaerobic glycerol-3-phosphate dehydrogenase subunit B from Aliivibrio fischeri (strain ATCC 700601 / ES114) (Vibrio fischeri).